The sequence spans 264 residues: Spermidine/putrescine transport system permease protein PotC (264 aa).

6 helical membrane-spanning segments follow: residues 10 to 30 (FMTA…VNSF), 66 to 86 (MAVF…VALY), 109 to 129 (IVMA…LGFW), 131 to 151 (LLFS…YSRL), 176 to 196 (IILP…FTLS), and 232 to 252 (ALAT…QLIA). Residues 60 to 248 (AQHSLTMAVF…VLSLVMVIAS (189 aa)) enclose the ABC transmembrane type-1 domain.

Belongs to the binding-protein-dependent transport system permease family. CysTW subfamily.

It is found in the cell inner membrane. Required for the activity of the bacterial periplasmic transport system of putrescine and spermidine. The protein is Spermidine/putrescine transport system permease protein PotC (potC) of Shigella flexneri.